A 172-amino-acid polypeptide reads, in one-letter code: Adenine phosphoribosyltransferase (172 aa).

This sequence belongs to the purine/pyrimidine phosphoribosyltransferase family. In terms of assembly, homodimer.

The protein resides in the cytoplasm. The catalysed reaction is AMP + diphosphate = 5-phospho-alpha-D-ribose 1-diphosphate + adenine. It functions in the pathway purine metabolism; AMP biosynthesis via salvage pathway; AMP from adenine: step 1/1. Catalyzes a salvage reaction resulting in the formation of AMP, that is energically less costly than de novo synthesis. The protein is Adenine phosphoribosyltransferase of Pediococcus pentosaceus (strain ATCC 25745 / CCUG 21536 / LMG 10740 / 183-1w).